The chain runs to 301 residues: Quinolinate synthase (301 aa).

2 residues coordinate iminosuccinate: H21 and S38. Position 83 (C83) interacts with [4Fe-4S] cluster. Iminosuccinate contacts are provided by residues Y109–N111 and S126. Residue C169 participates in [4Fe-4S] cluster binding. Iminosuccinate is bound by residues H195–E197 and T212. Position 257 (C257) interacts with [4Fe-4S] cluster.

Belongs to the quinolinate synthase family. Type 2 subfamily. [4Fe-4S] cluster is required as a cofactor.

It localises to the cytoplasm. It catalyses the reaction iminosuccinate + dihydroxyacetone phosphate = quinolinate + phosphate + 2 H2O + H(+). Its pathway is cofactor biosynthesis; NAD(+) biosynthesis; quinolinate from iminoaspartate: step 1/1. Catalyzes the condensation of iminoaspartate with dihydroxyacetone phosphate to form quinolinate. The polypeptide is Quinolinate synthase (Clostridium perfringens (strain 13 / Type A)).